A 132-amino-acid polypeptide reads, in one-letter code: Small ribosomal subunit protein uS8 (132 aa).

It belongs to the universal ribosomal protein uS8 family. In terms of assembly, part of the 30S ribosomal subunit. Contacts proteins S5 and S12.

Its function is as follows. One of the primary rRNA binding proteins, it binds directly to 16S rRNA central domain where it helps coordinate assembly of the platform of the 30S subunit. The polypeptide is Small ribosomal subunit protein uS8 (Gluconacetobacter diazotrophicus (strain ATCC 49037 / DSM 5601 / CCUG 37298 / CIP 103539 / LMG 7603 / PAl5)).